We begin with the raw amino-acid sequence, 293 residues long: Elongation factor Ts (293 aa).

Residues 80-83 form an involved in Mg(2+) ion dislocation from EF-Tu region; that stretch reads TDFV.

This sequence belongs to the EF-Ts family.

It is found in the cytoplasm. In terms of biological role, associates with the EF-Tu.GDP complex and induces the exchange of GDP to GTP. It remains bound to the aminoacyl-tRNA.EF-Tu.GTP complex up to the GTP hydrolysis stage on the ribosome. This chain is Elongation factor Ts, found in Paraburkholderia phytofirmans (strain DSM 17436 / LMG 22146 / PsJN) (Burkholderia phytofirmans).